The sequence spans 530 residues: Chaperonin GroEL 2 (530 aa).

Residues 30–33, Lys51, 87–91, Gly415, 479–481, and Asp495 each bind ATP; these read TLGP, DGTTT, and NAA.

Belongs to the chaperonin (HSP60) family. As to quaternary structure, forms a cylinder of 14 subunits composed of two heptameric rings stacked back-to-back. Interacts with the co-chaperonin GroES.

Its subcellular location is the cytoplasm. The catalysed reaction is ATP + H2O + a folded polypeptide = ADP + phosphate + an unfolded polypeptide.. Functionally, together with its co-chaperonin GroES, plays an essential role in assisting protein folding. The GroEL-GroES system forms a nano-cage that allows encapsulation of the non-native substrate proteins and provides a physical environment optimized to promote and accelerate protein folding. This chain is Chaperonin GroEL 2, found in Vibrio cholerae serotype O1 (strain ATCC 39315 / El Tor Inaba N16961).